Here is a 765-residue protein sequence, read N- to C-terminus: LPS-assembly protein LptD (765 aa).

The first 18 residues, 1–18 (MQIRYFLALSLLPQLVLA), serve as a signal peptide directing secretion.

It belongs to the LptD family. In terms of assembly, component of the lipopolysaccharide transport and assembly complex. Interacts with LptE and LptA.

The protein localises to the cell outer membrane. In terms of biological role, together with LptE, is involved in the assembly of lipopolysaccharide (LPS) at the surface of the outer membrane. This is LPS-assembly protein LptD from Shewanella sp. (strain MR-4).